The chain runs to 352 residues: N-lysine methyltransferase KMT5A (352 aa).

Positions 21–51 (AVAATAPGPEMVERRGPGRPRTNGENVFTGQ) are disordered. Ser59 is subject to Phosphoserine. The disordered stretch occupies residues 87–202 (PLAGIYRKRD…KSKAELQSEE (116 aa)). Over residues 109 to 121 (MKAEEQKIKDARR) the composition is skewed to basic and acidic residues. At Thr140 the chain carries Phosphothreonine. A compositionally biased stretch (basic residues) spans 156-172 (GLKKPVRGKQAPRKKAQ). Positions 216–337 (EGMKIDLIDG…AGEELLYDYG (122 aa)) constitute an SET domain. Residues 226–228 (KGR), Tyr271, and 298–299 (NH) contribute to the S-adenosyl-L-methionine site.

It belongs to the class V-like SAM-binding methyltransferase superfamily. Histone-lysine methyltransferase family. PR/SET subfamily. In terms of assembly, interacts with L3MBTL1. Interacts with SIRT2 (phosphorylated form); the interaction is direct, stimulates KMT5A-mediated methyltransferase activity at histone H4 'Lys-20' (H4K20me1) and is increased in a H(2)O(2)-induced oxidative stress-dependent manner. Ubiquitinated and degraded by the DCX(DTL) complex.

It localises to the nucleus. The protein localises to the chromosome. The catalysed reaction is L-lysyl(20)-[histone H4] + S-adenosyl-L-methionine = N(6)-methyl-L-lysyl(20)-[histone H4] + S-adenosyl-L-homocysteine + H(+). It catalyses the reaction L-lysyl-[protein] + S-adenosyl-L-methionine = N(6)-methyl-L-lysyl-[protein] + S-adenosyl-L-homocysteine + H(+). In terms of biological role, protein-lysine N-methyltransferase that monomethylates both histones and non-histone proteins. Specifically monomethylates 'Lys-20' of histone H4 (H4K20me1). H4K20me1 is enriched during mitosis and represents a specific tag for epigenetic transcriptional repression. Mainly functions in euchromatin regions, thereby playing a central role in the silencing of euchromatic genes. Required for cell proliferation, probably by contributing to the maintenance of proper higher-order structure of DNA during mitosis. Involved in chromosome condensation and proper cytokinesis. Nucleosomes are preferred as substrate compared to free histones. Mediates monomethylation of p53/TP53 at 'Lys-382', leading to repress p53/TP53-target genes. Plays a negative role in TGF-beta response regulation and a positive role in cell migration. In Bos taurus (Bovine), this protein is N-lysine methyltransferase KMT5A.